Here is a 398-residue protein sequence, read N- to C-terminus: Cytochrome b (398 aa).

Residues L45 to M65 traverse the membrane as a helical segment. The heme b site is built by H95 and H109. Helical transmembrane passes span A96 to Y116, I129 to W149, F164 to V184, F192 to V212, F245 to Y265, P277 to L297, L304 to D324, I339 to V359, and I366 to G386. Heme b contacts are provided by H196 and H210.

Belongs to the cytochrome b family. As to quaternary structure, the main subunits of complex b-c1 are: cytochrome b, cytochrome c1 and the Rieske protein. The cofactor is heme b.

Its subcellular location is the cell membrane. Its function is as follows. Component of the ubiquinol-cytochrome c reductase complex (complex III or cytochrome b-c1 complex), which is a respiratory chain that generates an electrochemical potential coupled to ATP synthesis. This chain is Cytochrome b (petB), found in Rickettsia prowazekii (strain Madrid E).